A 241-amino-acid polypeptide reads, in one-letter code: Beta-nerve growth factor (241 aa).

Positions 1-18 are cleaved as a signal peptide; it reads MSMLFYTLITAFLIGIQA. The propeptide occupies 19–121; that stretch reads EPHSESNVPA…PFNRTHRSKR (103 aa). Residues Asn69 and Asn114 are each glycosylated (N-linked (GlcNAc...) asparagine). Disulfide bonds link Cys136/Cys201, Cys179/Cys229, and Cys189/Cys231. A 1-acyl-sn-glycero-3-phospho-(1D-myo-inositol) contacts are provided by Tyr173 and Lys209. Position 209 (Lys209) interacts with a 1-acyl-sn-glycero-3-phospho-L-serine.

It belongs to the NGF-beta family. Homodimer. The homodimer interacts with a single NTRK1 chain. The homodimer interacts with a single NGFR chain. The NGF dimer interacts with a single SORCS2 chain (via extracellular domain). The NGF precursor (proNGF) binds to a receptor complex formed by SORT1 and NGFR, which leads to NGF endocytosis. Both mature NGF and the immature NGF precursor (proNGF) interact with SORCS2 and with the heterodimer formed by SORCS2 and NGFR (via extracellular domains). The NGF precursor (proNGF) has much higher affinity for SORCS2 than mature NGF. The NGF precursor (proNGF) has much higher affinity for SORT1 than mature NGF. Interacts with ADAM10 in a divalent cation-dependent manner. Interaction with SORCS3.

It localises to the secreted. It is found in the endosome lumen. Its function is as follows. Nerve growth factor is important for the development and maintenance of the sympathetic and sensory nervous systems. Extracellular ligand for the NTRK1 and NGFR receptors, activates cellular signaling cascades to regulate neuronal proliferation, differentiation and survival. The immature NGF precursor (proNGF) functions as a ligand for the heterodimeric receptor formed by SORCS2 and NGFR, and activates cellular signaling cascades that lead to inactivation of RAC1 and/or RAC2, reorganization of the actin cytoskeleton and neuronal growth cone collapse. In contrast to mature NGF, the precursor form (proNGF) promotes neuronal apoptosis (in vitro). Inhibits metalloproteinase-dependent proteolysis of platelet glycoprotein VI. Binds lysophosphatidylinositol and lysophosphatidylserine between the two chains of the homodimer. The lipid-bound form promotes histamine relase from mast cells, contrary to the lipid-free form. This chain is Beta-nerve growth factor (NGF), found in Homo sapiens (Human).